Consider the following 228-residue polypeptide: CD302 antigen (228 aa).

The N-terminal stretch at 1-20 is a signal peptide; that stretch reads MPHAALSSLVLLSLATAIFA. Residues 21–165 are Extracellular-facing; it reads DCPSSIWVQF…YDKKYLSDNH (145 aa). The 120-residue stretch at 30–149 folds into the C-type lectin domain; that stretch reads FQGSCYTFLQ…CEMSSVTGTL (120 aa). Residue Asn-107 is glycosylated (N-linked (GlcNAc...) asparagine). Cys-125 and Cys-140 are oxidised to a cystine. Residues 166–186 form a helical membrane-spanning segment; it reads ILISTLVIASTVTLAVLGAVI. Residues 187-228 lie on the Cytoplasmic side of the membrane; it reads WFLYRRSARSGFTSFSPAPQSPYSDGCALVVSEEDEYSVQLD.

Its subcellular location is the membrane. It is found in the cell projection. The protein localises to the filopodium. It localises to the cytoplasm. The protein resides in the cell cortex. Its subcellular location is the microvillus. Its function is as follows. Potential multifunctional C-type lectin receptor that may play roles in endocytosis and phagocytosis as well as in cell adhesion and migration. This is CD302 antigen (Cd302) from Rattus norvegicus (Rat).